Here is a 319-residue protein sequence, read N- to C-terminus: Beta-ketoacyl-[acyl-carrier-protein] synthase III (319 aa).

Catalysis depends on residues Cys-113 and His-246. The interval 247-251 (QANRR) is ACP-binding. Asn-276 is a catalytic residue.

The protein belongs to the thiolase-like superfamily. FabH family. As to quaternary structure, homodimer.

Its subcellular location is the cytoplasm. The catalysed reaction is malonyl-[ACP] + acetyl-CoA + H(+) = 3-oxobutanoyl-[ACP] + CO2 + CoA. It functions in the pathway lipid metabolism; fatty acid biosynthesis. In terms of biological role, catalyzes the condensation reaction of fatty acid synthesis by the addition to an acyl acceptor of two carbons from malonyl-ACP. Catalyzes the first condensation reaction which initiates fatty acid synthesis and may therefore play a role in governing the total rate of fatty acid production. Possesses both acetoacetyl-ACP synthase and acetyl transacylase activities. Its substrate specificity determines the biosynthesis of branched-chain and/or straight-chain of fatty acids. In Rhizorhabdus wittichii (strain DSM 6014 / CCUG 31198 / JCM 15750 / NBRC 105917 / EY 4224 / RW1) (Sphingomonas wittichii), this protein is Beta-ketoacyl-[acyl-carrier-protein] synthase III.